The chain runs to 288 residues: ATP synthase gamma chain (288 aa).

This sequence belongs to the ATPase gamma chain family. In terms of assembly, F-type ATPases have 2 components, CF(1) - the catalytic core - and CF(0) - the membrane proton channel. CF(1) has five subunits: alpha(3), beta(3), gamma(1), delta(1), epsilon(1). CF(0) has three main subunits: a, b and c.

Its subcellular location is the cell inner membrane. Functionally, produces ATP from ADP in the presence of a proton gradient across the membrane. The gamma chain is believed to be important in regulating ATPase activity and the flow of protons through the CF(0) complex. The sequence is that of ATP synthase gamma chain from Rickettsia prowazekii (strain Madrid E).